The sequence spans 722 residues: uncharacterized protein (722 aa).

Residues S575, D658, and H691 each act as charge relay system in the active site.

This sequence belongs to the peptidase S9B family.

This is an uncharacterized protein from Rickettsia prowazekii (strain Madrid E).